A 39-amino-acid polypeptide reads, in one-letter code: Contryphan-Cal2 (39 aa).

Positions 1–20 are cleaved as a signal peptide; it reads MTRTAVLLLTLLFLVAMAAS. Cysteines 29 and 35 form a disulfide.

As to expression, expressed by the venom duct.

The protein localises to the secreted. In terms of biological role, probable neurotoxin. This is Contryphan-Cal2 from Californiconus californicus (California cone).